The following is a 194-amino-acid chain: UPF0301 protein FTH_1193 (194 aa).

This sequence belongs to the UPF0301 (AlgH) family.

This chain is UPF0301 protein FTH_1193, found in Francisella tularensis subsp. holarctica (strain OSU18).